The sequence spans 508 residues: GMP synthase [glutamine-hydrolyzing] (508 aa).

A Glutamine amidotransferase type-1 domain is found at 1-189 (MILVLDFGSQ…ALLVCGCEKT (189 aa)). Cys78 functions as the Nucleophile in the catalytic mechanism. Residues His163 and Glu165 contribute to the active site. A GMPS ATP-PPase domain is found at 190–383 (WGMQHFAQRE…LGVSQDFLMH (194 aa)). Residue 217-223 (SGGVDST) coordinates ATP.

In terms of assembly, homodimer.

The enzyme catalyses XMP + L-glutamine + ATP + H2O = GMP + L-glutamate + AMP + diphosphate + 2 H(+). Its pathway is purine metabolism; GMP biosynthesis; GMP from XMP (L-Gln route): step 1/1. Catalyzes the synthesis of GMP from XMP. The chain is GMP synthase [glutamine-hydrolyzing] from Helicobacter pylori (strain G27).